Here is a 102-residue protein sequence, read N- to C-terminus: Small ribosomal subunit protein uS10 (102 aa).

This sequence belongs to the universal ribosomal protein uS10 family. Part of the 30S ribosomal subunit.

Functionally, involved in the binding of tRNA to the ribosomes. The polypeptide is Small ribosomal subunit protein uS10 (Bartonella tribocorum (strain CIP 105476 / IBS 506)).